Consider the following 435-residue polypeptide: Glutamyl-tRNA reductase (435 aa).

Residues 50–53 (TCNR), S110, 115–117 (ETQ), and Q121 each bind substrate. The active-site Nucleophile is the C51. 189-194 (GAGEMS) contacts NADP(+).

This sequence belongs to the glutamyl-tRNA reductase family. As to quaternary structure, homodimer.

The enzyme catalyses (S)-4-amino-5-oxopentanoate + tRNA(Glu) + NADP(+) = L-glutamyl-tRNA(Glu) + NADPH + H(+). It participates in porphyrin-containing compound metabolism; protoporphyrin-IX biosynthesis; 5-aminolevulinate from L-glutamyl-tRNA(Glu): step 1/2. In terms of biological role, catalyzes the NADPH-dependent reduction of glutamyl-tRNA(Glu) to glutamate 1-semialdehyde (GSA). This is Glutamyl-tRNA reductase from Campylobacter lari (strain RM2100 / D67 / ATCC BAA-1060).